Reading from the N-terminus, the 1048-residue chain is FHIP family protein GJ17503 (1048 aa).

The span at 1–15 (MSWLRTSPLRQSLTR) shows a compositional bias: polar residues. Residues 1–32 (MSWLRTSPLRQSLTRNSGSSGSGNSSATTTLR) are disordered. Residues 16 to 26 (NSGSSGSGNSS) show a composition bias toward low complexity. Ser-500 carries the post-translational modification Phosphoserine. Disordered regions lie at residues 652-675 (TTTA…GRRD), 813-871 (APMH…KRRS), and 924-984 (ARGA…ESGL). A compositionally biased stretch (low complexity) spans 816-838 (HQQHQQQQLQHTTNPTQQQQAQQ). Polar residues-rich tracts occupy residues 839–857 (RSTY…SPTS) and 929–954 (QEQS…TAVV). The span at 955–978 (SSSNSSIGGSTQTLSATHSSSTLH) shows a compositional bias: low complexity.

Belongs to the FHIP family.

The polypeptide is FHIP family protein GJ17503 (Drosophila virilis (Fruit fly)).